We begin with the raw amino-acid sequence, 500 residues long: Probable malate:quinone oxidoreductase (500 aa).

It belongs to the MQO family. The cofactor is FAD.

It catalyses the reaction (S)-malate + a quinone = a quinol + oxaloacetate. It functions in the pathway carbohydrate metabolism; tricarboxylic acid cycle; oxaloacetate from (S)-malate (quinone route): step 1/1. The polypeptide is Probable malate:quinone oxidoreductase (Bacillus cytotoxicus (strain DSM 22905 / CIP 110041 / 391-98 / NVH 391-98)).